A 92-amino-acid polypeptide reads, in one-letter code: Small ribosomal subunit protein uS19 (92 aa).

Belongs to the universal ribosomal protein uS19 family.

In terms of biological role, protein S19 forms a complex with S13 that binds strongly to the 16S ribosomal RNA. This is Small ribosomal subunit protein uS19 from Hyphomonas neptunium (strain ATCC 15444).